The sequence spans 718 residues: Origin of replication complex subunit 3 (718 aa).

Residues 26 to 43 show a composition bias toward low complexity; the sequence is GAAASSSSSSAPSLPSSG. Positions 26 to 75 are disordered; that stretch reads GAAASSSSSSAPSLPSSGRARRRIDVSGLASPNPKPGKRSRDDDAAEDDD. The Nuclear localization signal signature appears at 659–666; it reads IKRKPHTS.

This sequence belongs to the ORC3 family. As to quaternary structure, component of the origin recognition complex (ORC) composed of at least ORC1, ORC2, ORC3, ORC4, ORC5 and ORC6. ORC is regulated in a cell-cycle and development dependent manner. It is sequentially assembled at the exit from anaphase of mitosis and disassembled as cells enter S phase. As to expression, expressed at low levels in the shoot apical meristem (SAM), leaves, ears and roots (including root tips).

It localises to the nucleus. Its function is as follows. Component of the origin recognition complex (ORC) that binds origins of replication. DNA-binding is ATP-dependent. The specific DNA sequences that define origins of replication have not been identified yet. The chain is Origin of replication complex subunit 3 from Oryza sativa subsp. japonica (Rice).